Reading from the N-terminus, the 438-residue chain is PHAF1 protein CG7083 (438 aa).

The protein belongs to the PHAF1 family.

The protein localises to the cytoplasm. It localises to the preautophagosomal structure. In terms of biological role, may play a regulatory role in autophagic activity. In Drosophila melanogaster (Fruit fly), this protein is PHAF1 protein CG7083.